A 374-amino-acid chain; its full sequence is Probable carboxylesterase 4, mitochondrial (374 aa).

The transit peptide at 1–52 (MLRRITCSSSLASPSLFLRFFRQLPRSYSSPTTIAVSGRNIRRLSTPTTLRC) directs the protein to the mitochondrion. Residues 135 to 137 (HGG) carry the Involved in the stabilization of the negatively charged intermediate by the formation of the oxyanion hole motif. Catalysis depends on residues serine 219, aspartate 317, and histidine 349.

This sequence belongs to the 'GDXG' lipolytic enzyme family. In terms of tissue distribution, expressed in leaves, stems, flowers and siliques.

It is found in the mitochondrion. It carries out the reaction a carboxylic ester + H2O = an alcohol + a carboxylate + H(+). Carboxylesterase acting on esters with varying acyl chain length. The chain is Probable carboxylesterase 4, mitochondrial (CXE4) from Arabidopsis thaliana (Mouse-ear cress).